We begin with the raw amino-acid sequence, 468 residues long: V-type proton ATPase subunit H (468 aa).

It belongs to the V-ATPase H subunit family. As to quaternary structure, V-ATPase is a heteromultimeric enzyme made up of two complexes: the ATP-hydrolytic V1 complex and the proton translocation V0 complex. The V1 complex consists of three catalytic AB heterodimers that form a heterohexamer, three peripheral stalks each consisting of EG heterodimers, one central rotor including subunits D and F, and the regulatory subunits C and H. The proton translocation complex V0 consists of the proton transport subunit a, a ring of proteolipid subunits c9c'', rotary subunit d, subunits e and f, and the accessory subunits VhaAC45 and ATP6AP2.

Its function is as follows. Subunit of the V1 complex of vacuolar(H+)-ATPase (V-ATPase), a multisubunit enzyme composed of a peripheral complex (V1) that hydrolyzes ATP and a membrane integral complex (V0) that translocates protons. V-ATPase is responsible for acidifying and maintaining the pH of intracellular compartments and in some cell types, is targeted to the plasma membrane, where it is responsible for acidifying the extracellular environment. Subunit H is essential for V-ATPase activity, but not for the assembly of the complex. The sequence is that of V-type proton ATPase subunit H (VhaSFD) from Drosophila melanogaster (Fruit fly).